Reading from the N-terminus, the 917-residue chain is Tape measure protein (917 aa).

2 coiled-coil regions span residues 501–528 (LDAGQRMLDSLRQQYASMQAQLEATEKL) and 575–602 (LEDELNTRKEIQKTLDDYKRLNESLRTD). The interval 852–877 (DDVRSNQSGGGAPTINLIEDRSRAGQ) is disordered.

This sequence belongs to the Lambdavirus tape measure protein family. As to quaternary structure, interacts with the tail initiator complex presumably through its C-terminus domain. Interacts with the tail assembly proteins.

The protein resides in the virion. Serves as a ruler that controls the length of tail by stopping the tail tube polymerization and is probably released from the tail shaft during infection to facilitate DNA translocation into the host cell. Assembles into a multimeric linear form probably arranged as a coil of alpha-helices and stabilized by the covering tail assembly proteins. Its C-terminus fixes the tail tip complex, thereby forming the tail assembly initiator complex. Tail tube proteins polymerize around the tape measure protein, displacing the tail assembly proteins. When the tail reaches the length specified by the tape measure protein, it stops and becomes capped by the tail terminator protein. This is Tape measure protein from Pseudomonas phage PAJU2.